A 197-amino-acid chain; its full sequence is GTP cyclohydrolase-2 (197 aa).

Residue 50–54 participates in GTP binding; that stretch reads RIHSE. Zn(2+) contacts are provided by Cys-55, Cys-66, and Cys-68. Residues Gln-71, 93 to 95, and Thr-115 each bind GTP; that span reads EGR. Residue Asp-127 is the Proton acceptor of the active site. The active-site Nucleophile is the Arg-129. The GTP site is built by Thr-150 and Lys-155.

Belongs to the GTP cyclohydrolase II family. Zn(2+) is required as a cofactor.

It catalyses the reaction GTP + 4 H2O = 2,5-diamino-6-hydroxy-4-(5-phosphoribosylamino)-pyrimidine + formate + 2 phosphate + 3 H(+). Its pathway is cofactor biosynthesis; riboflavin biosynthesis; 5-amino-6-(D-ribitylamino)uracil from GTP: step 1/4. In terms of biological role, catalyzes the conversion of GTP to 2,5-diamino-6-ribosylamino-4(3H)-pyrimidinone 5'-phosphate (DARP), formate and pyrophosphate. The protein is GTP cyclohydrolase-2 of Tolumonas auensis (strain DSM 9187 / NBRC 110442 / TA 4).